Consider the following 277-residue polypeptide: 2,3,4,5-tetrahydropyridine-2,6-dicarboxylate N-succinyltransferase (277 aa).

The substrate site is built by R106 and D143.

Belongs to the transferase hexapeptide repeat family. As to quaternary structure, homotrimer.

The protein localises to the cytoplasm. It carries out the reaction (S)-2,3,4,5-tetrahydrodipicolinate + succinyl-CoA + H2O = (S)-2-succinylamino-6-oxoheptanedioate + CoA. It functions in the pathway amino-acid biosynthesis; L-lysine biosynthesis via DAP pathway; LL-2,6-diaminopimelate from (S)-tetrahydrodipicolinate (succinylase route): step 1/3. This is 2,3,4,5-tetrahydropyridine-2,6-dicarboxylate N-succinyltransferase from Xylella fastidiosa (strain Temecula1 / ATCC 700964).